Here is a 466-residue protein sequence, read N- to C-terminus: Secreted RxLR effector protein 101 (466 aa).

A signal peptide spans 1–21 (MRGAYSVITALLVVASSQIAA). A RxLR-dEER motif is present at residues 48 to 63 (RYLRGSQHVHDSNEER). Disordered regions lie at residues 99-127 (KMPHAATAGKKVSRVTRTGKKMTSHGANA) and 384-405 (RTFNGNTDTASLPSKRSKVRSS). Over residues 109-121 (KVSRVTRTGKKMT) the composition is skewed to basic residues. Polar residues predominate over residues 385–395 (TFNGNTDTASL).

Belongs to the RxLR effector family.

The protein localises to the secreted. Its subcellular location is the host nucleus. Functionally, secreted effector that partially suppresses the host cell death induced by cell death-inducing proteins. The chain is Secreted RxLR effector protein 101 from Plasmopara viticola (Downy mildew of grapevine).